Reading from the N-terminus, the 263-residue chain is Proline rich transmembrane protein 1B (263 aa).

Positions 1–17 (MEAGAGGAGSDTKGGGS) are enriched in gly residues. The tract at residues 1-107 (MEAGAGGAGS…IGFVGEPPPY (107 aa)) is disordered. 2 stretches are compositionally biased toward low complexity: residues 37 to 47 (QMPAQPALPQL) and 75 to 86 (DAPAQAAGEAGP). Helical transmembrane passes span 190–210 (MMES…IAIV) and 238–258 (VLFS…YVVV).

Belongs to the CD225/Dispanin family.

The protein resides in the membrane. This is Proline rich transmembrane protein 1B from Homo sapiens (Human).